A 248-amino-acid polypeptide reads, in one-letter code: Acetylglutamate kinase (248 aa).

Substrate is bound by residues 36–37 (GG), Arg-58, and Asn-147.

It belongs to the acetylglutamate kinase family. ArgB subfamily.

It is found in the cytoplasm. The catalysed reaction is N-acetyl-L-glutamate + ATP = N-acetyl-L-glutamyl 5-phosphate + ADP. Its pathway is amino-acid biosynthesis; L-arginine biosynthesis; N(2)-acetyl-L-ornithine from L-glutamate: step 2/4. Functionally, catalyzes the ATP-dependent phosphorylation of N-acetyl-L-glutamate. This Thermus thermophilus (strain ATCC BAA-163 / DSM 7039 / HB27) protein is Acetylglutamate kinase.